Consider the following 239-residue polypeptide: dITP/XTP pyrophosphatase (239 aa).

Residue 7-12 (THNEGK) coordinates substrate. Aspartate 74 serves as the catalytic Proton acceptor. Aspartate 74 serves as a coordination point for Mg(2+). Substrate is bound by residues serine 75, 182 to 185 (FGYD), lysine 214, and 219 to 220 (HR).

This sequence belongs to the HAM1 NTPase family. As to quaternary structure, homodimer. It depends on Mg(2+) as a cofactor.

The catalysed reaction is XTP + H2O = XMP + diphosphate + H(+). It carries out the reaction dITP + H2O = dIMP + diphosphate + H(+). It catalyses the reaction ITP + H2O = IMP + diphosphate + H(+). Functionally, pyrophosphatase that catalyzes the hydrolysis of nucleoside triphosphates to their monophosphate derivatives, with a high preference for the non-canonical purine nucleotides XTP (xanthosine triphosphate), dITP (deoxyinosine triphosphate) and ITP. Seems to function as a house-cleaning enzyme that removes non-canonical purine nucleotides from the nucleotide pool, thus preventing their incorporation into DNA/RNA and avoiding chromosomal lesions. The chain is dITP/XTP pyrophosphatase from Bifidobacterium animalis subsp. lactis (strain AD011).